The following is a 369-amino-acid chain: Uroporphyrinogen decarboxylase (369 aa).

Residues Arg36 to Arg40, Asp86, Tyr162, Ser217, and His342 contribute to the substrate site.

This sequence belongs to the uroporphyrinogen decarboxylase family. Homodimer.

The protein localises to the cytoplasm. It carries out the reaction uroporphyrinogen III + 4 H(+) = coproporphyrinogen III + 4 CO2. It functions in the pathway porphyrin-containing compound metabolism; protoporphyrin-IX biosynthesis; coproporphyrinogen-III from 5-aminolevulinate: step 4/4. Its function is as follows. Catalyzes the decarboxylation of four acetate groups of uroporphyrinogen-III to yield coproporphyrinogen-III. The sequence is that of Uroporphyrinogen decarboxylase from Albidiferax ferrireducens (strain ATCC BAA-621 / DSM 15236 / T118) (Rhodoferax ferrireducens).